We begin with the raw amino-acid sequence, 1092 residues long: Rho GTPase-activating protein 7 (1092 aa).

In terms of domain architecture, SAM spans 11 to 78; sequence LTQIEAKEAC…LNKCAVMKLE (68 aa). Phosphoserine is present on residues serine 86, serine 89, and serine 129. Disordered stretches follow at residues 121–179, 297–330, 409–434, and 492–553; these read PKQD…DATT, RSVS…TRSL, GPGH…NSSS, and SDEG…SGVG. Residues 130 to 143 are compositionally biased toward polar residues; it reads PDNSRLQSATSHES. Composition is skewed to low complexity over residues 154-174 and 299-325; these read VASV…AAHS and VSNS…SPVT. The focal adhesion-targeting (FAT) stretch occupies residues 275–448; the sequence is QLNCVEISAL…RLSIYDNVPG (174 aa). Serine 322 bears the Phosphoserine mark. The span at 415–426 shows a compositional bias: basic and acidic residues; the sequence is LRRENSHDSPKE. Positions 500–512 are enriched in polar residues; it reads ALDSVSPCPSSPK. Over residues 514–526 the composition is skewed to basic and acidic residues; sequence IHLDVDHDRRTPS. A compositionally biased stretch (polar residues) spans 527–536; sequence DLDSTGNSLN. A polybasic cluster (PBR) region spans residues 615–637; the sequence is KHGFSWAVPKFMKRIKVPDYKDR. A Rho-GAP domain is found at 642 to 848; it reads VPLTVNVQRS…HMIAECKKLF (207 aa). An START domain is found at 878-1085; that stretch reads NSDQPADYRH…RDSFSNQNTE (208 aa).

In terms of assembly, interacts with EF1A1, facilitates EF1A1 distribution to the membrane periphery and ruffles upon growth factor stimulation and suppresses cell migration. Interacts with tensin TNS1 (via N-terminus); the interaction is decreased by phosphorylation of TNS1. Interacts with TNS3 and PTEN; in resting cells, interacts with TNS3 (via C2 tensin-type domain) but, following growth factor stimulation, TNS3 and PTEN are phosphorylated which leads to weakened interaction with TNS3 and enhanced interaction with PTEN. Interacts (via C-terminus) with tensin TNS4 (via SH2 domain); the interaction is independent of tyrosine phosphorylation of DLC1. In terms of tissue distribution, widely expressed with the highest levels in heart, liver and lung.

Its subcellular location is the cytoplasm. The protein localises to the cell junction. The protein resides in the focal adhesion. It localises to the membrane. In terms of biological role, functions as a GTPase-activating protein for the small GTPases RHOA, RHOB, RHOC and CDC42, terminating their downstream signaling. This induces morphological changes and detachment through cytoskeletal reorganization, playing a critical role in biological processes such as cell migration and proliferation. Also functions in vivo as an activator of the phospholipase PLCD1. Active DLC1 increases cell migration velocity but reduces directionality. Required for growth factor-induced epithelial cell migration; in resting cells, interacts with TNS3 while PTEN interacts with the p85 regulatory subunit of the PI3K kinase complex but growth factor stimulation induces phosphorylation of TNS3 and PTEN, causing them to change their binding preference so that PTEN interacts with DLC1 and TNS3 interacts with p85. The PTEN-DLC1 complex translocates to the posterior of migrating cells to activate RHOA while the TNS3-p85 complex translocates to the leading edge of migrating cells to promote RAC1 activation. This chain is Rho GTPase-activating protein 7 (Dlc1), found in Mus musculus (Mouse).